The chain runs to 674 residues: DNA mismatch repair protein MutL (674 aa).

Belongs to the DNA mismatch repair MutL/HexB family.

In terms of biological role, this protein is involved in the repair of mismatches in DNA. It is required for dam-dependent methyl-directed DNA mismatch repair. May act as a 'molecular matchmaker', a protein that promotes the formation of a stable complex between two or more DNA-binding proteins in an ATP-dependent manner without itself being part of a final effector complex. The chain is DNA mismatch repair protein MutL from Clostridium perfringens (strain ATCC 13124 / DSM 756 / JCM 1290 / NCIMB 6125 / NCTC 8237 / Type A).